A 237-amino-acid polypeptide reads, in one-letter code: Probable F-box protein At1g53815 (237 aa).

An F-box domain is found at 41-72 (ISNILSRLPLKSKAKCRCVSKLWSSIIRRPNY).

In Arabidopsis thaliana (Mouse-ear cress), this protein is Probable F-box protein At1g53815.